The sequence spans 419 residues: L-rhamnose isomerase (419 aa).

3 residues coordinate Mn(2+): His-262, Asp-294, and Asp-296.

The protein belongs to the rhamnose isomerase family. As to quaternary structure, homotetramer. The cofactor is Mn(2+).

Its subcellular location is the cytoplasm. It carries out the reaction L-rhamnopyranose = L-rhamnulose. The protein operates within carbohydrate degradation; L-rhamnose degradation; glycerone phosphate from L-rhamnose: step 1/3. Its function is as follows. Catalyzes the interconversion of L-rhamnose and L-rhamnulose. The sequence is that of L-rhamnose isomerase from Salmonella agona (strain SL483).